The following is a 127-amino-acid chain: Large ribosomal subunit protein bL20 (127 aa).

It belongs to the bacterial ribosomal protein bL20 family.

Binds directly to 23S ribosomal RNA and is necessary for the in vitro assembly process of the 50S ribosomal subunit. It is not involved in the protein synthesizing functions of that subunit. The polypeptide is Large ribosomal subunit protein bL20 (Corynebacterium diphtheriae (strain ATCC 700971 / NCTC 13129 / Biotype gravis)).